A 497-amino-acid polypeptide reads, in one-letter code: MSQTARRLGPQDMFFLYSESSTTMMHVGALMPFTPPSGAPPDLLRQLVDESKASEVVEPWSLRLSHPELLYHPTQSWVVDDNFDLDYHVRRSALASPGDERELGIPVSRLHSHALDLRRPPWEVHFIEGLEGGRFAIYIKMHHSLIDGYTGQKMLARSLSTDPHDTTHPLFFNIPTPGRSPADTQDSVGGGLIAGAGNVLDGLGDVVRGLGGLVSGVGSVLGSVAGAGRSTFELTKALVNAQLRSDHEYRNLVGSVQAPHCILNTRISRNRRFATQQYPLDRLKAIGAQYDATINDVALAIIGGGLRRFLDELGELPNKSLIVVLPVNVRPKDDEGGGNAVATILATLGTDVADPVQRLAAVTASTRAAKAQLRSMDKDAILAYSAALMAPYGVQLASTLSGVKPPWPYTFNLCVSNVPGPEDVLYLRGSRMEASYPVSLVAHSQALNVTLQSYAGTLNFGFIGCRDTLPHLQRLAVYTGEALDQLAAADGAAGLGS.

The active-site Proton acceptor is H143.

It belongs to the long-chain O-acyltransferase family.

It catalyses the reaction an acyl-CoA + a 1,2-diacyl-sn-glycerol = a triacyl-sn-glycerol + CoA. It carries out the reaction di-(9Z)-octadecenoylglycerol + (9Z)-octadecenoyl-CoA = 1,2,3-tri-(9Z-octadecenoyl)-glycerol + CoA. The catalysed reaction is hexadecan-1-ol + hexadecanoyl-CoA = hexadecanyl hexadecanoate + CoA. The protein operates within glycerolipid metabolism; triacylglycerol biosynthesis. Functionally, upon expression in E.coli has a weak triacylglycerol synthase function, making triacylglycerol (TG) from diolein and long-chain fatty acyl-CoA. Also functions weakly as a wax synthase, as it incorporates palmityl alcohol into wax esters in the presence of palmitoyl-CoA. This is Putative diacyglycerol O-acyltransferase Rv3480c from Mycobacterium tuberculosis (strain ATCC 25618 / H37Rv).